Here is a 212-residue protein sequence, read N- to C-terminus: Ribosomal RNA small subunit methyltransferase G (212 aa).

S-adenosyl-L-methionine is bound by residues Gly76, Met81, Val127–Glu128, and Arg145.

Belongs to the methyltransferase superfamily. RNA methyltransferase RsmG family.

Its subcellular location is the cytoplasm. The enzyme catalyses guanosine(527) in 16S rRNA + S-adenosyl-L-methionine = N(7)-methylguanosine(527) in 16S rRNA + S-adenosyl-L-homocysteine. Specifically methylates the N7 position of guanine in position 527 of 16S rRNA. In Acinetobacter baylyi (strain ATCC 33305 / BD413 / ADP1), this protein is Ribosomal RNA small subunit methyltransferase G.